We begin with the raw amino-acid sequence, 525 residues long: M-phase inducer phosphatase 1 (525 aa).

The segment at 1–42 is disordered; the sequence is MELGPEPPHRRRLLFTCSPTPAPQPTGKVQFGASRAGGLSPV. The Phosphodegron motif lies at 74–84; it reads MGSSESTDSGF. Serine 76 carries the phosphoserine; by CHEK1 modification. 3 positions are modified to phosphoserine; by NEK11: serine 79, serine 82, and serine 88. Residue serine 124 is modified to Phosphoserine; by CHEK1 and CHEK2. Positions 141 to 143 match the KEN box motif; that stretch reads KEN. Serine 178 is subject to Phosphoserine; by CHEK1. The segment at 260–318 is disordered; sequence FDSPSPCSSTSSCSTRAVKRADRSHEESPRGTKRRKSSEASPVKADVPEPTQLPHQSLS. Residues 262-274 are compositionally biased toward low complexity; the sequence is SPSPCSSTSSCST. Positions 278 to 289 are enriched in basic and acidic residues; that stretch reads KRADRSHEESPR. A phosphoserine; by CHEK1 and CHEK2 mark is found at serine 283 and serine 296. The Rhodanese domain maps to 377 to 483; it reads LIKEFVIIDC…FFLKCQSHCE (107 aa). Cysteine 432 is an active-site residue. Phosphothreonine; by CHEK1 is present on threonine 508. Residues serine 514 and serine 520 each carry the phosphoserine; by PLK3 modification.

It belongs to the MPI phosphatase family. In terms of assembly, interacts with CCNB1/cyclin B1. Interacts with YWHAE/14-3-3 epsilon when phosphorylated. Interacts with CUL1 specifically when CUL1 is neddylated and active. Interacts with BTRC/BTRCP1 and FBXW11/BTRCP2. Interactions with CUL1, BTRC and FBXW11 are enhanced upon DNA damage. Interacts with CHEK2; mediates CDC25A phosphorylation and degradation in response to infrared-induced DNA damages. Interacts with HSP90AB1; prevents heat shock-mediated CDC25A degradation and contributes to cell cycle progression. Post-translationally, phosphorylated by CHEK1 on Ser-76, Ser-124, Ser-178, Ser-283, Ser-296 and Thr-508 during checkpoint mediated cell cycle arrest. Also phosphorylated by CHEK2 on Ser-124, Ser-283, and Ser-296 during checkpoint mediated cell cycle arrest. Phosphorylation on Ser-178 and Thr-508 creates binding sites for YWHAE/14-3-3 epsilon which inhibits CDC25A. Phosphorylation on Ser-76, Ser-124, Ser-178, Ser-283 and Ser-296 may also promote ubiquitin-dependent proteolysis of CDC25A by the SCF complex. Phosphorylation of CDC25A at Ser-76 by CHEK1 primes it for subsequent phosphorylation at Ser-79, Ser-82 and Ser-88 by NEK11. Phosphorylation by NEK11 is required for BTRC-mediated polyubiquitination and degradation. Phosphorylation by PIM1 leads to an increase in phosphatase activity. Phosphorylated by PLK3 following DNA damage, leading to promote its ubiquitination and degradation. Ubiquitinated by the anaphase promoting complex/cyclosome (APC/C) ubiquitin ligase complex that contains FZR1/CDH1 during G1 phase leading to its degradation by the proteasome. Ubiquitinated by a SCF complex containing BTRC and FBXW11 during S phase leading to its degradation by the proteasome. Deubiquitination by USP17L2/DUB3 leads to its stabilization.

It carries out the reaction O-phospho-L-tyrosyl-[protein] + H2O = L-tyrosyl-[protein] + phosphate. Stimulated by B-type cyclins. Stimulated by PIM1-mediated phosphorylation. Its function is as follows. Tyrosine protein phosphatase which functions as a dosage-dependent inducer of mitotic progression. Directly dephosphorylates CDK1 and stimulates its kinase activity. Also dephosphorylates CDK2 in complex with cyclin-E, in vitro. In Rattus norvegicus (Rat), this protein is M-phase inducer phosphatase 1 (Cdc25a).